The primary structure comprises 236 residues: MRLAVNIDHIATLRNARGEQEPDPVAAALLAERCGAAGIVCHLREDRRHIKDLDLARLREAVTTKLDLEMAMTGELQEIALKTKPELITLVPEKREELTTEGGFDVARHFAVLKEFLKPLNDNGIEVSLFIEPEKKAVDLAREAGADLVELHTGLYAQKELENNTDLELQRIREAATYAKSIGLRVVAGHGLNYRNIGPFREIPEIEEVSIGHAIIARAVFTGLDEAVREMLRLIQ.

3-amino-2-oxopropyl phosphate is bound at residue Asn6. Residue 8-9 (DH) coordinates 1-deoxy-D-xylulose 5-phosphate. Arg17 contributes to the 3-amino-2-oxopropyl phosphate binding site. The active-site Proton acceptor is the His42. 1-deoxy-D-xylulose 5-phosphate contacts are provided by Arg44 and His49. Glu69 acts as the Proton acceptor in catalysis. Thr99 is a binding site for 1-deoxy-D-xylulose 5-phosphate. His190 functions as the Proton donor in the catalytic mechanism. Residues Gly191 and 212-213 (GH) contribute to the 3-amino-2-oxopropyl phosphate site.

The protein belongs to the PNP synthase family. Homooctamer; tetramer of dimers.

It is found in the cytoplasm. It catalyses the reaction 3-amino-2-oxopropyl phosphate + 1-deoxy-D-xylulose 5-phosphate = pyridoxine 5'-phosphate + phosphate + 2 H2O + H(+). Its pathway is cofactor biosynthesis; pyridoxine 5'-phosphate biosynthesis; pyridoxine 5'-phosphate from D-erythrose 4-phosphate: step 5/5. In terms of biological role, catalyzes the complicated ring closure reaction between the two acyclic compounds 1-deoxy-D-xylulose-5-phosphate (DXP) and 3-amino-2-oxopropyl phosphate (1-amino-acetone-3-phosphate or AAP) to form pyridoxine 5'-phosphate (PNP) and inorganic phosphate. This is Pyridoxine 5'-phosphate synthase from Chlorobium phaeobacteroides (strain DSM 266 / SMG 266 / 2430).